Here is a 252-residue protein sequence, read N- to C-terminus: TLC domain-containing protein 1 (252 aa).

Positions 1–29 (MGPGWRAPSAALVGGSVALFGALRRAALA) are cleaved as a signal peptide. Residues 30–47 (LPRPAAVRSRPGRVWRWR) lie on the Extracellular side of the membrane. In terms of domain architecture, TLC spans 41–235 (GRVWRWRNLL…LLRSDFFPSL (195 aa)). A helical membrane pass occupies residues 48-68 (NLLVSFAHSVLAGLWALFSLW). The Cytoplasmic segment spans residues 69-84 (QSPELLSDIQDGYSVS). A helical transmembrane segment spans residues 85-105 (GHLLVCFSSGYFIHDSLDIIF). Residues 106–124 (NQQSRSSWEYLVHHAMAIS) are Extracellular-facing. The segment at residues 125-145 (AFVSLIITGRFLVAAMLLLLV) is an intramembrane region (helical). At 146–174 (EVSNIFLTIRMLLKMSNVPSPALYEANKY) the chain is on the extracellular side. The helical transmembrane segment at 175–195 (VNLVMYFAFRLAPQVYLTWYF) threads the bilayer. The Cytoplasmic segment spans residues 196 to 202 (VRYVEVQ). A helical transmembrane segment spans residues 203-223 (GQGAFLMANLLLLDAMILMYF). Residues 224–252 (SRLLRSDFFPSLRKGSVGRDVDGEKFLID) lie on the Extracellular side of the membrane.

Interacts with CACNA1C in vitro; however the relevance of the interaction in vivo is unclear.

It localises to the cell membrane. Its function is as follows. Regulates the composition and fluidity of the plasma membrane. Inhibits the incorporation of membrane-fluidizing phospholipids containing omega-3 long-chain polyunsaturated fatty acids (LCPUFA) and thereby promotes membrane rigidity. Does not appear to have any effect on LCPUFA synthesis. The protein is TLC domain-containing protein 1 (TLCD1) of Gallus gallus (Chicken).